Reading from the N-terminus, the 325-residue chain is MNAFTQIDELVMPLPLEPQGYTIAPSKQSPRLLELTFARETVEAFVQAVAQWPVQALEYKSFLRFRIGEILDELCQGTLRPVLLNTILDRATGGMLITPIGLDDVSQAEDMVKFTTACAHLIGRSNYDAMSGQFYARFVVVNSDNSDSYLRQPHRVMELHNDGTFVNQITDYVLMLKIDEKNMEGGNSLLLHLDDWEQCEAFFRHPMARREMRWTAPPSKKVAEDVFHSVFDTDTEGRPTMRYIDQFVQPENYEEGIWLNALSESLEGSSKKVSVPVGVGSFLLINNLFWLHGRDRFTPHEGLRRELMRQRGYVAFPKPLYQRGQ.

Fe cation-binding residues include His160, Asp162, and His292.

It belongs to the glutarate hydroxylase family. Homotetramer. It depends on Fe(2+) as a cofactor.

It carries out the reaction glutarate + 2-oxoglutarate + O2 = (S)-2-hydroxyglutarate + succinate + CO2. The protein operates within amino-acid degradation. Its function is as follows. Acts as an alpha-ketoglutarate-dependent dioxygenase catalyzing hydroxylation of glutarate (GA) to L-2-hydroxyglutarate (L2HG). Functions in a L-lysine degradation pathway that proceeds via cadaverine, glutarate and L-2-hydroxyglutarate. This Pseudomonas putida (strain ATCC 700007 / DSM 6899 / JCM 31910 / BCRC 17059 / LMG 24140 / F1) protein is Glutarate 2-hydroxylase.